Consider the following 406-residue polypeptide: Tyrosine-specific transport system 2 (406 aa).

The next 11 helical transmembrane spans lie at 7 to 27 (FGSALIIAGTTIGAGMLAMPL), 38 to 58 (LLLLVGLWALLVYSGLLFVEV), 83 to 103 (IFATLSLLVLLYALSAAYITG), 119 to 139 (AMSLKTAIIIFTVVLGSFVVV), 150 to 170 (VLFIGKLIAFAFVLFMMLPKV), 183 to 203 (AFVVSAAPIFLTSFGFHVIMA), 219 to 239 (AILIGTAIPLAAYLVWQLATH), 279 to 299 (VFSSLALITSFLGVMLGVFEG), 314 to 334 (FVLTIAAFLPPLVFALFYPEG), 335 to 355 (FITALSYAGLLCAFYCLILPI), and 376 to 396 (NFALVLALLIGVVIMLIPFLI).

Belongs to the amino acid/polyamine transporter 2 family. Mtr/TnaB/TyrP permease subfamily.

Its subcellular location is the cell inner membrane. It catalyses the reaction L-tyrosine(in) + H(+)(in) = L-tyrosine(out) + H(+)(out). Functionally, transports tyrosine across the cytoplasmic membrane. The transport system is energized by the proton motive force. The protein is Tyrosine-specific transport system 2 (tyrP-B) of Haemophilus influenzae (strain ATCC 51907 / DSM 11121 / KW20 / Rd).